The sequence spans 134 residues: ATP synthase epsilon chain (134 aa).

The protein belongs to the ATPase epsilon chain family. F-type ATPases have 2 components, CF(1) - the catalytic core - and CF(0) - the membrane proton channel. CF(1) has five subunits: alpha(3), beta(3), gamma(1), delta(1), epsilon(1). CF(0) has three main subunits: a, b and c.

Its subcellular location is the cellular thylakoid membrane. In terms of biological role, produces ATP from ADP in the presence of a proton gradient across the membrane. The polypeptide is ATP synthase epsilon chain (Prochlorococcus marinus (strain MIT 9312)).